The sequence spans 123 residues: Small ribosomal subunit protein uS12cz/uS12cy (123 aa).

The protein belongs to the universal ribosomal protein uS12 family. In terms of assembly, part of the 30S ribosomal subunit.

The protein resides in the plastid. Its subcellular location is the chloroplast. In terms of biological role, with S4 and S5 plays an important role in translational accuracy. Located at the interface of the 30S and 50S subunits. This chain is Small ribosomal subunit protein uS12cz/uS12cy (rps12-A), found in Eucalyptus globulus subsp. globulus (Tasmanian blue gum).